We begin with the raw amino-acid sequence, 317 residues long: Cyclin-T1-3 (317 aa).

Belongs to the cyclin family. Cyclin T subfamily. As to quaternary structure, interacts with CDKC-1 and CDKC-2. As to expression, abundantly expressed in flowers. Expressed in roots, seedlings, rosettes and stems.

This Arabidopsis thaliana (Mouse-ear cress) protein is Cyclin-T1-3 (CYCT1-3).